The following is a 309-amino-acid chain: Glutaminase (309 aa).

Ser-64, Asn-114, Glu-160, Asn-167, Tyr-191, Tyr-243, and Val-261 together coordinate substrate.

This sequence belongs to the glutaminase family. As to quaternary structure, homotetramer.

The enzyme catalyses L-glutamine + H2O = L-glutamate + NH4(+). The polypeptide is Glutaminase (Methylobacterium radiotolerans (strain ATCC 27329 / DSM 1819 / JCM 2831 / NBRC 15690 / NCIMB 10815 / 0-1)).